Here is a 276-residue protein sequence, read N- to C-terminus: Large ribosomal subunit protein uL2 (276 aa).

A disordered region spans residues 212–276; sequence NRHRGIRPQT…KLIISRKKHK (65 aa). Residues 257 to 276 are compositionally biased toward basic residues; sequence YKTRKKKASDKLIISRKKHK.

This sequence belongs to the universal ribosomal protein uL2 family. As to quaternary structure, part of the 50S ribosomal subunit. Forms a bridge to the 30S subunit in the 70S ribosome.

Its function is as follows. One of the primary rRNA binding proteins. Required for association of the 30S and 50S subunits to form the 70S ribosome, for tRNA binding and peptide bond formation. It has been suggested to have peptidyltransferase activity; this is somewhat controversial. Makes several contacts with the 16S rRNA in the 70S ribosome. The chain is Large ribosomal subunit protein uL2 from Helicobacter acinonychis (strain Sheeba).